A 193-amino-acid chain; its full sequence is Signal peptidase I (193 aa).

Residues 1–25 (MTEEQKPTSEKSVKRKSNTYWEWGK) lie on the Cytoplasmic side of the membrane. A helical transmembrane segment spans residues 26 to 42 (AIIIAVALALLIRHFLF). Residues 43–193 (EPYLVEGSSM…FPFHDMRQTK (151 aa)) lie on the Extracellular side of the membrane. Catalysis depends on residues Ser-51 and Lys-93.

Belongs to the peptidase S26 family.

The protein resides in the cell membrane. It catalyses the reaction Cleavage of hydrophobic, N-terminal signal or leader sequences from secreted and periplasmic proteins.. The protein is Signal peptidase I (sipS2) of Bacillus amyloliquefaciens (Bacillus velezensis).